The following is a 296-amino-acid chain: 33 kDa chaperonin (296 aa).

2 disulfides stabilise this stretch: cysteine 236–cysteine 238 and cysteine 269–cysteine 272.

It belongs to the HSP33 family. In terms of processing, under oxidizing conditions two disulfide bonds are formed involving the reactive cysteines. Under reducing conditions zinc is bound to the reactive cysteines and the protein is inactive.

Its subcellular location is the cytoplasm. Its function is as follows. Redox regulated molecular chaperone. Protects both thermally unfolding and oxidatively damaged proteins from irreversible aggregation. Plays an important role in the bacterial defense system toward oxidative stress. The chain is 33 kDa chaperonin from Lactobacillus acidophilus (strain ATCC 700396 / NCK56 / N2 / NCFM).